A 298-amino-acid chain; its full sequence is MSEQTPHHCGSVAVIGRPNVGKSTLTNALVGAKVSIVSNRPQTTRHRLLGIATYPEGQLVLVDTPGLHKVQKRAMNRVMNRAARGSLEGVDAGLLVIEAGRWDEEDSLAFNVLRDAGIPVVLVVNKIDRLKEKGALLPFLQQVTEGRDFAAVHPISAQKRNGLEALVRDVLKLLPEAPPMFGEDEITDRSQRFLAGELVREQLMRQLGEELPYATTVEIERFTEDGNLLRIGAVIWVEREGQKAIVIGKGGARLKEIGAKSRLQMERLFGAKVFLETWVRVREGWSDDEAALKAFGYE.

The Era-type G domain maps to 8 to 176 (HCGSVAVIGR…VRDVLKLLPE (169 aa)). The segment at 16–23 (GRPNVGKS) is G1. 16-23 (GRPNVGKS) contributes to the GTP binding site. The segment at 42 to 46 (QTTRH) is G2. The segment at 63 to 66 (DTPG) is G3. GTP-binding positions include 63-67 (DTPGL) and 125-128 (NKID). The segment at 125–128 (NKID) is G4. Residues 155 to 157 (ISA) form a G5 region. Positions 199 to 283 (VREQLMRQLG…FLETWVRVRE (85 aa)) constitute a KH type-2 domain.

Belongs to the TRAFAC class TrmE-Era-EngA-EngB-Septin-like GTPase superfamily. Era GTPase family. As to quaternary structure, monomer.

The protein localises to the cytoplasm. It localises to the cell inner membrane. Its function is as follows. An essential GTPase that binds both GDP and GTP, with rapid nucleotide exchange. Plays a role in 16S rRNA processing and 30S ribosomal subunit biogenesis and possibly also in cell cycle regulation and energy metabolism. The protein is GTPase Era of Stenotrophomonas maltophilia (strain K279a).